A 362-amino-acid polypeptide reads, in one-letter code: MTKIKLGLLYGGKSAEHQVSLQTALAAIKALNQEKFEIHPIYITEQGQWMRGERIEGEVTSVQALQMSGEANAISPVSLSTEIIPAPASKQEEAIDVIFPLLHGPNGEDGTVQGLLELMNIPYVGNGVLASAAGMDKVVMKNIFAEAGLNQAKYTSFVRSVWEKNREEAYEKVEEALGYPCFVKPANLGSSVGINKCKDREELEKAFEEAFQFDRKIIVEENIIGREVEVGVLGNDDPKCSVVGEIVPKKEFYDYKSKYIDGDTALIIPAEITEEETATIQRDAIRAFQALDGAGLTRADFFLTKDGEVYINEVNTMPGFTPFSMFPLLWQHTGLSYPELIEELIRLAIERHKEKQKIKYTI.

Residues 141 to 346 (KNIFAEAGLN…YPELIEELIR (206 aa)) form the ATP-grasp domain. 174-229 (EEALGYPCFVKPANLGSSVGINKCKDREELEKAFEEAFQFDRKIIVEENIIGREVE) is an ATP binding site. D300, E313, and N315 together coordinate Mg(2+).

Belongs to the D-alanine--D-alanine ligase family. Requires Mg(2+) as cofactor. Mn(2+) is required as a cofactor.

It localises to the cytoplasm. The enzyme catalyses 2 D-alanine + ATP = D-alanyl-D-alanine + ADP + phosphate + H(+). It participates in cell wall biogenesis; peptidoglycan biosynthesis. Cell wall formation. The chain is D-alanine--D-alanine ligase from Bacillus cytotoxicus (strain DSM 22905 / CIP 110041 / 391-98 / NVH 391-98).